We begin with the raw amino-acid sequence, 211 residues long: Thymidylate kinase (211 aa).

Residue 11–18 participates in ATP binding; that stretch reads GPDGAGKT.

Belongs to the thymidylate kinase family.

It carries out the reaction dTMP + ATP = dTDP + ADP. Its function is as follows. Phosphorylation of dTMP to form dTDP in both de novo and salvage pathways of dTTP synthesis. The chain is Thymidylate kinase from Streptococcus pyogenes serotype M3 (strain ATCC BAA-595 / MGAS315).